The chain runs to 177 residues: uncharacterized protein (177 aa).

This sequence to M.jannaschii MJ0628.

This is an uncharacterized protein from Methanocaldococcus jannaschii (strain ATCC 43067 / DSM 2661 / JAL-1 / JCM 10045 / NBRC 100440) (Methanococcus jannaschii).